Reading from the N-terminus, the 222-residue chain is Kinetochore protein Spc25 (222 aa).

A coiled-coil region spans residues 51 to 100 (RHQRKVGKLQKVIMERREELDKRVSFIEELDRELEATKLRSLAMKDRIKQ).

It belongs to the SPC25 family. Component of the Ndc80 complex, which is composed of Ndc80, Nuf2 and Spc25.

The protein resides in the nucleus. It is found in the chromosome. It localises to the centromere. The protein localises to the kinetochore. Functionally, acts as a component of the essential kinetochore-associated Ndc80 complex, which is required for chromosome segregation and spindle checkpoint activity during meiosis and mitosis. Required for kinetochore integrity and the organization of stable microtubule binding sites in the outer plate of the kinetochore. Participates in SAC signaling that responds specifically to disruptions in spindle microtubule dynamics. The NDC80 complex synergistically enhances the affinity of the SKA1 complex for microtubules and may allow the NDC80 complex to track depolymerizing microtubules. This Drosophila sechellia (Fruit fly) protein is Kinetochore protein Spc25.